The following is a 361-amino-acid chain: Caffeic acid 3-O-methyltransferase 2 (361 aa).

128 to 134 contributes to the substrate binding site; it reads MNQDKVL. The segment at 160–178 is substrate binding; sequence AFEYHGTDPRFNKVFNQGM. 5 residues coordinate S-adenosyl-L-methionine: Gly-206, Asp-229, Asp-249, Met-250, and Lys-263. The Proton acceptor role is filled by His-267.

Belongs to the class I-like SAM-binding methyltransferase superfamily. Cation-independent O-methyltransferase family. COMT subfamily. As to quaternary structure, homodimer.

The catalysed reaction is (E)-caffeate + S-adenosyl-L-methionine = (E)-ferulate + S-adenosyl-L-homocysteine + H(+). It participates in aromatic compound metabolism; phenylpropanoid biosynthesis. In terms of biological role, catalyzes the conversion of caffeic acid to ferulic acid and of 5-hydroxyferulic acid to sinapic acid. The resulting products may subsequently be converted to the corresponding alcohols that are incorporated into lignins. This Ocimum basilicum (Sweet basil) protein is Caffeic acid 3-O-methyltransferase 2 (COMT2).